Consider the following 501-residue polypeptide: 2,3-bisphosphoglycerate-independent phosphoglycerate mutase (501 aa).

Mn(2+) is bound by residues Asp12 and Ser62. Residue Ser62 is the Phosphoserine intermediate of the active site. Residues His121, 150–151 (RD), Arg182, Arg188, 253–256 (RSDR), and Lys322 each bind substrate. The Mn(2+) site is built by Asp389, His393, Asp430, His431, and His449.

Belongs to the BPG-independent phosphoglycerate mutase family. In terms of assembly, monomer. It depends on Mn(2+) as a cofactor.

The catalysed reaction is (2R)-2-phosphoglycerate = (2R)-3-phosphoglycerate. The protein operates within carbohydrate degradation; glycolysis; pyruvate from D-glyceraldehyde 3-phosphate: step 3/5. In terms of biological role, catalyzes the interconversion of 2-phosphoglycerate and 3-phosphoglycerate. This is 2,3-bisphosphoglycerate-independent phosphoglycerate mutase from Ehrlichia ruminantium (strain Welgevonden).